The primary structure comprises 113 residues: Large ribosomal subunit protein bL17 (113 aa).

It belongs to the bacterial ribosomal protein bL17 family. In terms of assembly, part of the 50S ribosomal subunit. Contacts protein L32.

This Natranaerobius thermophilus (strain ATCC BAA-1301 / DSM 18059 / JW/NM-WN-LF) protein is Large ribosomal subunit protein bL17.